The chain runs to 209 residues: MQSKFIVIEGLDGAGKSTAISFVRKYLEKNNLAAIYTREPGGTKIAEELRNLVLHNKYDEEIHSDSELLMIYAGRVQHYRNLIAPALEKGINVVSDRFYWSSMAYQGGGRGVELSKIRALNDNFLNGCEPDLVIYLDIDPILGLQRAQKVGSPDRIEKAGLEFFNRTRKVFKDLVKDSDNAIEIDAAKSIQEVEKQIYLILDKHFNFQN.

Position 10–17 (10–17 (GLDGAGKS)) interacts with ATP.

It belongs to the thymidylate kinase family.

It catalyses the reaction dTMP + ATP = dTDP + ADP. In terms of biological role, phosphorylation of dTMP to form dTDP in both de novo and salvage pathways of dTTP synthesis. This is Thymidylate kinase from Francisella tularensis subsp. tularensis (strain FSC 198).